We begin with the raw amino-acid sequence, 428 residues long: MNQSEVLFAQARTVISGGVNSPVRAFNGVGGNPIFFTRGKGAYLFDVDGNKYIDYVASWGPMILGHANQEVINAIKTNLENGLSFGAPTHIETMLAEKVCELIPSIELVRMVSSGTEATMSAIRLARGYTGRDKIIKFEGCYHGHSDALLVKAGSAALTLGVPTSPGVPKDFAKHTLTLEYNNINQVYEILKEVGTEVACIIVEPVAGNMNCILPIDGFLQGLRKLCDEYGIILIFDEVMTGFRVALGGAQEFYNVEPDLTTLGKIIGGGLPVGIFGGKCEIMKCIAPLGPIYQAGTLSGNPISMSAGLAMLNVLSKDKNFYTTLNIKVQKLTKGFLAKAKENNIGMTANVVGGMFGLFFTDAKSVTNFKEVSQCNVELFKRFYHLMLEEGVYMTPSIYETDFISSAHSDMDIQNTIDAAGRVFAKLV.

The residue at position 265 (lysine 265) is an N6-(pyridoxal phosphate)lysine.

The protein belongs to the class-III pyridoxal-phosphate-dependent aminotransferase family. HemL subfamily. As to quaternary structure, homodimer. The cofactor is pyridoxal 5'-phosphate.

The protein resides in the cytoplasm. It carries out the reaction (S)-4-amino-5-oxopentanoate = 5-aminolevulinate. The protein operates within porphyrin-containing compound metabolism; protoporphyrin-IX biosynthesis; 5-aminolevulinate from L-glutamyl-tRNA(Glu): step 2/2. In Vesicomyosocius okutanii subsp. Calyptogena okutanii (strain HA), this protein is Glutamate-1-semialdehyde 2,1-aminomutase.